Reading from the N-terminus, the 159-residue chain is 2-amino-4-hydroxy-6-hydroxymethyldihydropteridine pyrophosphokinase (159 aa).

The protein belongs to the HPPK family. In terms of assembly, monomer.

The catalysed reaction is 6-hydroxymethyl-7,8-dihydropterin + ATP = (7,8-dihydropterin-6-yl)methyl diphosphate + AMP + H(+). It functions in the pathway cofactor biosynthesis; tetrahydrofolate biosynthesis; 2-amino-4-hydroxy-6-hydroxymethyl-7,8-dihydropteridine diphosphate from 7,8-dihydroneopterin triphosphate: step 4/4. Functionally, catalyzes the transfer of pyrophosphate from adenosine triphosphate (ATP) to 6-hydroxymethyl-7,8-dihydropterin, an enzymatic step in folate biosynthesis pathway. The sequence is that of 2-amino-4-hydroxy-6-hydroxymethyldihydropteridine pyrophosphokinase (folK) from Escherichia coli (strain K12).